The following is an 862-amino-acid chain: DNA mismatch repair protein MutS (862 aa).

Residue Gly618–Ser625 coordinates ATP. Positions Gln799 to Pro824 are disordered. Over residues Gln806–Pro824 the composition is skewed to low complexity.

It belongs to the DNA mismatch repair MutS family.

This protein is involved in the repair of mismatches in DNA. It is possible that it carries out the mismatch recognition step. This protein has a weak ATPase activity. In Shewanella denitrificans (strain OS217 / ATCC BAA-1090 / DSM 15013), this protein is DNA mismatch repair protein MutS.